Consider the following 331-residue polypeptide: Adenine deaminase (331 aa).

3 residues coordinate Zn(2+): His17, His19, and His197. The active-site Proton donor is Glu200. Asp278 contributes to the Zn(2+) binding site. Asp279 contacts substrate.

This sequence belongs to the metallo-dependent hydrolases superfamily. Adenosine and AMP deaminases family. Adenine deaminase type 2 subfamily. It depends on Zn(2+) as a cofactor.

It carries out the reaction adenine + H2O + H(+) = hypoxanthine + NH4(+). Functionally, catalyzes the hydrolytic deamination of adenine to hypoxanthine. Plays an important role in the purine salvage pathway and in nitrogen catabolism. The sequence is that of Adenine deaminase from Wolinella succinogenes (strain ATCC 29543 / DSM 1740 / CCUG 13145 / JCM 31913 / LMG 7466 / NCTC 11488 / FDC 602W) (Vibrio succinogenes).